Here is a 790-residue protein sequence, read N- to C-terminus: Probable phosphoketolase (790 aa).

Belongs to the XFP family. The cofactor is thiamine diphosphate.

The sequence is that of Probable phosphoketolase from Nitrosomonas europaea (strain ATCC 19718 / CIP 103999 / KCTC 2705 / NBRC 14298).